Consider the following 336-residue polypeptide: ATP-dependent 6-phosphofructokinase (336 aa).

Gly-11 serves as a coordination point for ATP. 21 to 25 (RAVVR) is a binding site for ADP. Residues 72 to 73 (RY) and 102 to 105 (GDGS) each bind ATP. Asp-103 contributes to the Mg(2+) binding site. 125–127 (TID) contributes to the substrate binding site. Asp-127 acts as the Proton acceptor in catalysis. Arg-154 contributes to the ADP binding site. Residues Arg-162 and 169 to 171 (MGR) each bind substrate. ADP is bound by residues 185–187 (GAD), Lys-211, and 213–215 (KKH). Substrate contacts are provided by residues Glu-222, Arg-244, and 250–253 (HIQR).

This sequence belongs to the phosphofructokinase type A (PFKA) family. ATP-dependent PFK group I subfamily. Prokaryotic clade 'B1' sub-subfamily. As to quaternary structure, homotetramer. The cofactor is Mg(2+).

The protein resides in the cytoplasm. The enzyme catalyses beta-D-fructose 6-phosphate + ATP = beta-D-fructose 1,6-bisphosphate + ADP + H(+). It functions in the pathway carbohydrate degradation; glycolysis; D-glyceraldehyde 3-phosphate and glycerone phosphate from D-glucose: step 3/4. Allosterically activated by ADP and other diphosphonucleosides, and allosterically inhibited by phosphoenolpyruvate. Functionally, catalyzes the phosphorylation of D-fructose 6-phosphate to fructose 1,6-bisphosphate by ATP, the first committing step of glycolysis. This chain is ATP-dependent 6-phosphofructokinase, found in Streptococcus sanguinis (strain SK36).